The primary structure comprises 353 residues: uncharacterized protein (353 aa).

An N-terminal signal peptide occupies residues 1–24 (MRVVERAVIACYLGITIFSGIAFG).

It belongs to the chlamydial CPn_1058/CT_355/TC_0634 family.

This is an uncharacterized protein from Chlamydia trachomatis serovar D (strain ATCC VR-885 / DSM 19411 / UW-3/Cx).